Here is a 448-residue protein sequence, read N- to C-terminus: Glucose-6-phosphate isomerase (448 aa).

Glutamate 290 (proton donor) is an active-site residue. Active-site residues include histidine 311 and lysine 425.

Belongs to the GPI family.

It localises to the cytoplasm. The catalysed reaction is alpha-D-glucose 6-phosphate = beta-D-fructose 6-phosphate. Its pathway is carbohydrate biosynthesis; gluconeogenesis. The protein operates within carbohydrate degradation; glycolysis; D-glyceraldehyde 3-phosphate and glycerone phosphate from D-glucose: step 2/4. Its function is as follows. Catalyzes the reversible isomerization of glucose-6-phosphate to fructose-6-phosphate. The protein is Glucose-6-phosphate isomerase of Oceanobacillus iheyensis (strain DSM 14371 / CIP 107618 / JCM 11309 / KCTC 3954 / HTE831).